A 173-amino-acid chain; its full sequence is Nicotinamide-nucleotide adenylyltransferase (173 aa).

It belongs to the archaeal NMN adenylyltransferase family.

It is found in the cytoplasm. The enzyme catalyses beta-nicotinamide D-ribonucleotide + ATP + H(+) = diphosphate + NAD(+). Its pathway is cofactor biosynthesis; NAD(+) biosynthesis; NAD(+) from nicotinamide D-ribonucleotide: step 1/1. This Methanosarcina acetivorans (strain ATCC 35395 / DSM 2834 / JCM 12185 / C2A) protein is Nicotinamide-nucleotide adenylyltransferase.